The following is a 632-amino-acid chain: MSIDCLYRRSSLFDTSFVPLHSSIPATSKMSASNSDVNAPISPVVDEGKSELVSPTLERLVAPFNCSPSSTPLQDVAGVGSKMSDTLWMGDLEPWMDATFIQQLWASLNEPVNVKVMRSKASSSETLISYCFVQFSSSAAAERALMKYNNTMIPGAHCTFKLNWATGGGIQHNNFVSRDPEFSIFVGDLLPTTEDSDLFMTFRSIYPSCTSAKIIVDPVTGLSRKYGFVRFSSEKEQQHALMHMQGYLCQGRPLRISVASPKSRASIAADSALGIVPTSTSNRQPNQDLCSMDPLNTTVFVGGLASNLSEKDLQVCFQPFGRILNIKIPFGKGCGFVQYSEKSAAEKAINTMQGALVGTSHIRLAWGHNTLPVSALSQSQSQVSDEGFDRTLSANQIFGMNQSVIGANSGSSNSSGSSLKSAPVSPRTAAAQSLLPNSVVSSINGMNSVNFSTISPPPLSRSASISPTLSGSGSGLTPLSSHFPSAATGLVGGQVYPQSSVLQSSKINGSAKVQPSVKLPEWLQPFSGNNHNSFATQDLLTRVSSLKLVDDEQPASLNGSAFQARASRPWNLGRERQSSLIDLRHELEQNENGLEKSGFGLNLRGRLPPRSYSTFNCTGQYLQPSLRLSRDS.

Phosphoserine; by MAPK sty1 is present on residues serine 42 and serine 54. Residues serine 67 and serine 69 each carry the phosphoserine modification. RRM domains lie at 85-167 (DTLW…WATG) and 182-261 (FSIF…VASP). Phosphoserine; by MAPK sty1 is present on serine 291. The region spanning 297–369 (TTVFVGGLAS…SHIRLAWGHN (73 aa)) is the RRM 3 domain. Position 455 is a phosphoserine; by MAPK sty1 (serine 455). The disordered stretch occupies residues 456-476 (PPPLSRSASISPTLSGSGSGL). The segment covering 466–476 (SPTLSGSGSGL) has biased composition (low complexity).

In terms of assembly, interacts with cip1 and cip2.

The protein localises to the cytoplasm. Regulates global gene expression after oxidative stress. Interacts and stabilizes atf1 and pcr1 mRNAs after oxidative stress, thus controlling their turnover. The sequence is that of RNA-binding post-transcriptional regulator csx1 (csx1) from Schizosaccharomyces pombe (strain 972 / ATCC 24843) (Fission yeast).